A 542-amino-acid polypeptide reads, in one-letter code: Glutamyl-tRNA(Gln) amidotransferase subunit B, mitochondrial (542 aa).

Belongs to the GatB/GatE family. GatB subfamily. As to quaternary structure, subunit of the heterotrimeric GatFAB amidotransferase (AdT) complex, composed of A, B and F subunits.

Its subcellular location is the mitochondrion. The enzyme catalyses L-glutamyl-tRNA(Gln) + L-glutamine + ATP + H2O = L-glutaminyl-tRNA(Gln) + L-glutamate + ADP + phosphate + H(+). In terms of biological role, allows the formation of correctly charged Gln-tRNA(Gln) through the transamidation of misacylated Glu-tRNA(Gln) in the mitochondria. The reaction takes place in the presence of glutamine and ATP through an activated gamma-phospho-Glu-tRNA(Gln). The chain is Glutamyl-tRNA(Gln) amidotransferase subunit B, mitochondrial from Candida glabrata (strain ATCC 2001 / BCRC 20586 / JCM 3761 / NBRC 0622 / NRRL Y-65 / CBS 138) (Yeast).